A 143-amino-acid polypeptide reads, in one-letter code: Transcriptional regulator MraZ (143 aa).

2 SpoVT-AbrB domains span residues 5–47 and 76–119; these read EYQH…PLTE and AMEG…AKER.

This sequence belongs to the MraZ family. In terms of assembly, forms oligomers.

The protein resides in the cytoplasm. The protein localises to the nucleoid. The polypeptide is Transcriptional regulator MraZ (Lactobacillus delbrueckii subsp. bulgaricus (strain ATCC 11842 / DSM 20081 / BCRC 10696 / JCM 1002 / NBRC 13953 / NCIMB 11778 / NCTC 12712 / WDCM 00102 / Lb 14)).